The sequence spans 300 residues: MEARVSQSLQLSSWINSDKVVRKPSGLLRFSEKWNEKPRHRVVVSCHLQPRKAAHSDRRVQLKVSCSPQNVQASVLESGCFSASIDEIETLKNKAEEVEEYLDGRCVYLVGMMGCGKTTVGRILAETLGYSFFDCDRLIEQAVGGITVAEIFELRGESFFRDNETEVLHKLSLMHRLVVSTGGGAVVRPINWRHMHKGISVWLDVPLEALAKRITTEGTKSRPLLHEESGDVYDTTLKRLTTLMETRGENYANASARVSLENIALKREKDVCHITPAEITLEVLIQIENFLKTQKSVVVL.

A chloroplast-targeting transit peptide spans 1–65; sequence MEARVSQSLQ…SDRRVQLKVS (65 aa). 111–118 is a binding site for ATP; sequence GMMGCGKT. T118 serves as a coordination point for Mg(2+). Residues D136, R161, and G183 each coordinate substrate. R222 serves as a coordination point for ATP.

The protein belongs to the shikimate kinase family. Mg(2+) serves as cofactor.

It localises to the plastid. Its subcellular location is the chloroplast. It carries out the reaction shikimate + ATP = 3-phosphoshikimate + ADP + H(+). Its pathway is metabolic intermediate biosynthesis; chorismate biosynthesis; chorismate from D-erythrose 4-phosphate and phosphoenolpyruvate: step 5/7. Its function is as follows. Catalyzes the specific phosphorylation of the 3-hydroxyl group of shikimic acid using ATP as a cosubstrate. This chain is Shikimate kinase, chloroplastic (SK), found in Solanum lycopersicum (Tomato).